Reading from the N-terminus, the 119-residue chain is Large ribosomal subunit protein bL20 (119 aa).

Belongs to the bacterial ribosomal protein bL20 family.

Binds directly to 23S ribosomal RNA and is necessary for the in vitro assembly process of the 50S ribosomal subunit. It is not involved in the protein synthesizing functions of that subunit. In Lactococcus lactis subsp. cremoris (strain MG1363), this protein is Large ribosomal subunit protein bL20.